Reading from the N-terminus, the 473-residue chain is Vasculin-like protein 1 (473 aa).

Positions 14 to 25 (STPQSSKSSTAT) are enriched in polar residues. Residues 14–55 (STPQSSKSSTATFDKHGEHLSRGEGRFGISRRRHNSSDGFFN) are disordered. The segment covering 26-38 (FDKHGEHLSRGEG) has biased composition (basic and acidic residues). Phosphoserine occurs at positions 49 and 76. 2 disordered regions span residues 88–127 (GTTG…RKGC) and 155–189 (DFPS…AKQP). The span at 103-112 (SQRSGGSSTG) shows a compositional bias: polar residues. Over residues 113 to 125 (NHRHWNGSFHSRK) the composition is skewed to basic residues. Position 199 is a phosphoserine (Ser-199). 2 disordered regions span residues 235–267 (LVPK…SRES) and 281–316 (LAAG…RRTT). A Phosphoserine modification is found at Ser-289. Residues 292-309 (ESPSSTTPPIEISSSRLT) show a composition bias toward low complexity. Thr-298 is modified (phosphothreonine). The residue at position 381 (Ser-381) is a Phosphoserine. A disordered region spans residues 453 to 473 (ECEDSDSETSSSQTSDDDAWK).

The protein belongs to the vasculin family.

It localises to the nucleus. Possible transcription factor. The chain is Vasculin-like protein 1 (Gpbp1l1) from Mus musculus (Mouse).